A 179-amino-acid polypeptide reads, in one-letter code: Ribosome maturation factor RimM (179 aa).

Residues 99 to 174 (EEDEYYFDQI…IMIVDLPEGL (76 aa)) enclose the PRC barrel domain.

This sequence belongs to the RimM family. Binds ribosomal protein uS19.

The protein localises to the cytoplasm. In terms of biological role, an accessory protein needed during the final step in the assembly of 30S ribosomal subunit, possibly for assembly of the head region. Essential for efficient processing of 16S rRNA. May be needed both before and after RbfA during the maturation of 16S rRNA. It has affinity for free ribosomal 30S subunits but not for 70S ribosomes. The sequence is that of Ribosome maturation factor RimM from Natranaerobius thermophilus (strain ATCC BAA-1301 / DSM 18059 / JW/NM-WN-LF).